Here is a 73-residue protein sequence, read N- to C-terminus: Toxin Td4 (73 aa).

Positions 1–7 are cleaved as a signal peptide; that stretch reads IGMVVEC. Residues 8–70 form the LCN-type CS-alpha/beta domain; sequence KDGYLVGNDG…TWDRATNRCG (63 aa). Cystine bridges form between Cys18–Cys69, Cys22–Cys44, Cys30–Cys50, and Cys34–Cys52. The residue at position 71 (Arg71) is an Arginine amide.

Belongs to the long (4 C-C) scorpion toxin superfamily. Sodium channel inhibitor family. Beta subfamily. Expressed by the venom gland.

The protein localises to the secreted. Functionally, beta toxins bind voltage-independently at site-4 of sodium channels (Nav) and shift the voltage of activation toward more negative potentials thereby affecting sodium channel activation and promoting spontaneous and repetitive firing. This is Toxin Td4 from Tityus discrepans (Venezuelan scorpion).